The primary structure comprises 456 residues: Bifunctional protein GlmU (456 aa).

Residues 1 to 229 (MLNNAMSVVI…LSEVEGVNNR (229 aa)) form a pyrophosphorylase region. Residues 11-14 (LAAG), Lys-25, Gln-76, 81-82 (GT), 103-105 (YGD), Gly-140, Glu-154, Asn-169, and Asn-227 contribute to the UDP-N-acetyl-alpha-D-glucosamine site. Residue Asp-105 participates in Mg(2+) binding. Asn-227 contributes to the Mg(2+) binding site. Residues 230–250 (LQLSRLERVYQSEQAEKLLLA) are linker. The interval 251–456 (GVMLRDPARF…EGWRRPVKKK (206 aa)) is N-acetyltransferase. UDP-N-acetyl-alpha-D-glucosamine is bound by residues Arg-333 and Lys-351. His-363 acts as the Proton acceptor in catalysis. UDP-N-acetyl-alpha-D-glucosamine-binding residues include Tyr-366 and Asn-377. Residues Ala-380, 386 to 387 (NY), Ser-405, Ala-423, and Arg-440 each bind acetyl-CoA.

In the N-terminal section; belongs to the N-acetylglucosamine-1-phosphate uridyltransferase family. The protein in the C-terminal section; belongs to the transferase hexapeptide repeat family. Homotrimer. Mg(2+) serves as cofactor.

Its subcellular location is the cytoplasm. It carries out the reaction alpha-D-glucosamine 1-phosphate + acetyl-CoA = N-acetyl-alpha-D-glucosamine 1-phosphate + CoA + H(+). It catalyses the reaction N-acetyl-alpha-D-glucosamine 1-phosphate + UTP + H(+) = UDP-N-acetyl-alpha-D-glucosamine + diphosphate. It functions in the pathway nucleotide-sugar biosynthesis; UDP-N-acetyl-alpha-D-glucosamine biosynthesis; N-acetyl-alpha-D-glucosamine 1-phosphate from alpha-D-glucosamine 6-phosphate (route II): step 2/2. It participates in nucleotide-sugar biosynthesis; UDP-N-acetyl-alpha-D-glucosamine biosynthesis; UDP-N-acetyl-alpha-D-glucosamine from N-acetyl-alpha-D-glucosamine 1-phosphate: step 1/1. The protein operates within bacterial outer membrane biogenesis; LPS lipid A biosynthesis. Catalyzes the last two sequential reactions in the de novo biosynthetic pathway for UDP-N-acetylglucosamine (UDP-GlcNAc). The C-terminal domain catalyzes the transfer of acetyl group from acetyl coenzyme A to glucosamine-1-phosphate (GlcN-1-P) to produce N-acetylglucosamine-1-phosphate (GlcNAc-1-P), which is converted into UDP-GlcNAc by the transfer of uridine 5-monophosphate (from uridine 5-triphosphate), a reaction catalyzed by the N-terminal domain. The protein is Bifunctional protein GlmU of Escherichia coli O127:H6 (strain E2348/69 / EPEC).